The chain runs to 99 residues: Protein RnfH (99 aa).

The protein belongs to the UPF0125 (RnfH) family.

In Buchnera aphidicola subsp. Acyrthosiphon pisum (strain 5A), this protein is Protein RnfH.